We begin with the raw amino-acid sequence, 67 residues long: Probable Sec-independent protein translocase protein TatE (67 aa).

A helical transmembrane segment spans residues 4 to 21; the sequence is ISITKLLVIAALVVLLFG.

Belongs to the TatA/E family. TatE subfamily.

It is found in the cell inner membrane. Part of the twin-arginine translocation (Tat) system that transports large folded proteins containing a characteristic twin-arginine motif in their signal peptide across membranes. TatE shares overlapping functions with TatA. The polypeptide is Probable Sec-independent protein translocase protein TatE (Citrobacter rodentium (strain ICC168) (Citrobacter freundii biotype 4280)).